Here is a 205-residue protein sequence, read N- to C-terminus: Guanylate kinase (205 aa).

The Guanylate kinase-like domain occupies 3 to 183 (GFVLLISGPS…SYEALRAILI (181 aa)). Residue 10–17 (GPSGAGKS) coordinates ATP.

The protein belongs to the guanylate kinase family.

The protein resides in the cytoplasm. The catalysed reaction is GMP + ATP = GDP + ADP. Its function is as follows. Essential for recycling GMP and indirectly, cGMP. The chain is Guanylate kinase from Campylobacter jejuni (strain RM1221).